The sequence spans 629 residues: Dapper homolog 3 (629 aa).

Ser-6 carries the post-translational modification Phosphoserine. Disordered stretches follow at residues 50-76 (PGMGGAEAEDEEDADEDEDAAAARRAA) and 105-574 (GGLE…GGLV). The span at 56–69 (EAEDEEDADEDEDA) shows a compositional bias: acidic residues. Residues 63–87 (ADEDEDAAAARRAAAALEEQLEALP) adopt a coiled-coil conformation. The segment covering 105–150 (GGLEQESGRSSGFYEDPSSTGGPDSPPSTFCGDSGFSGSSSYGRLG) has biased composition (low complexity). 2 positions are modified to phosphoserine: Ser-165 and Ser-239. Position 258 is an omega-N-methylarginine (Arg-258). The segment covering 301-311 (PAREPSLERVG) has biased composition (basic and acidic residues). Low complexity predominate over residues 316-335 (SPAALSRAWASSWESEAAPE). The segment covering 336 to 348 (PAAPPAAPSPPDS) has biased composition (pro residues). Residues Ser-426 and Ser-478 each carry the phosphoserine modification. Over residues 525–535 (SAGRLGPLGRR) the composition is skewed to low complexity. The span at 536-546 (GPAGGVGGGYG) shows a compositional bias: gly residues. Residues 547 to 568 (ESESSASEGESPAFSSASSDSD) show a composition bias toward low complexity. A PDZ-binding motif is present at residues 626–629 (MTTV).

The protein belongs to the dapper family. As to quaternary structure, can form homodimers and heterodimers with DACT1 or DACT3. Interacts with CSNK1D, PKA catalytic subunit, PKC-type kinase, DVL1, DVL3, VANGL1, VANGL2 and CTNND1. Interacts with DVL2.

Its function is as follows. May be involved in regulation of intracellular signaling pathways during development. Specifically thought to play a role in canonical and/or non-canonical Wnt signaling pathways through interaction with DSH (Dishevelled) family proteins. The polypeptide is Dapper homolog 3 (DACT3) (Homo sapiens (Human)).